A 183-amino-acid chain; its full sequence is Streptavidin-V2 (183 aa).

A signal peptide spans 1 to 24 (MRKIVVAAIAVSLTTVGITASASA). Residues 37–159 (AEAGITGTWY…GHDTFTKVKP (123 aa)) form the Avidin-like domain. Biotin is bound by residues Tyr67 and Tyr78. Residues 83–85 (RYD) carry the Cell attachment site; atypical motif. Trp116, Trp132, and Trp144 together coordinate biotin.

The protein belongs to the avidin/streptavidin family. Homotetramer.

It is found in the secreted. Functionally, the biological function of streptavidin is not known. Forms a strong non-covalent specific complex with biotin (one molecule of biotin per subunit of streptavidin). The polypeptide is Streptavidin-V2 (Streptomyces violaceus (Streptomyces venezuelae)).